Consider the following 393-residue polypeptide: NADH-quinone oxidoreductase subunit D (393 aa).

The protein belongs to the complex I 49 kDa subunit family. NDH-1 is composed of 14 different subunits. Subunits NuoB, C, D, E, F, and G constitute the peripheral sector of the complex.

Its subcellular location is the cell inner membrane. The enzyme catalyses a quinone + NADH + 5 H(+)(in) = a quinol + NAD(+) + 4 H(+)(out). Functionally, NDH-1 shuttles electrons from NADH, via FMN and iron-sulfur (Fe-S) centers, to quinones in the respiratory chain. The immediate electron acceptor for the enzyme in this species is believed to be ubiquinone. Couples the redox reaction to proton translocation (for every two electrons transferred, four hydrogen ions are translocated across the cytoplasmic membrane), and thus conserves the redox energy in a proton gradient. The sequence is that of NADH-quinone oxidoreductase subunit D from Ehrlichia ruminantium (strain Welgevonden).